Here is a 542-residue protein sequence, read N- to C-terminus: Carbamoyl phosphate synthase large chain, C-terminal section (542 aa).

The tract at residues 1–389 (MSDKVLVIGA…WKAQLAAGHE (389 aa)) is carbamoyl phosphate synthetic domain. Residues 122–316 (SKLLKKLGIP…LAKIGTKAIL (195 aa)) enclose the ATP-grasp domain. Residues Arg-158, Arg-197, Ile-199, Glu-204, Gly-230, Val-231, His-232, Ser-233, Gln-273, and Glu-287 each coordinate ATP. Mg(2+) is bound by residues Gln-273, Glu-287, and Asn-289. Mn(2+) is bound by residues Gln-273, Glu-287, and Asn-289. The MGS-like domain occupies 388–542 (HELPLEGTAV…KPEELTRYGG (155 aa)). The interval 390–542 (LPLEGTAVIS…KPEELTRYGG (153 aa)) is allosteric domain.

This sequence belongs to the CarB family. As to quaternary structure, composed of two chains; the small (or glutamine) chain promotes the hydrolysis of glutamine to ammonia, which is used by the large (or ammonia) chain to synthesize carbamoyl phosphate. Tetramer of heterodimers (alpha,beta)4. The cofactor is Mg(2+). Mn(2+) serves as cofactor.

The catalysed reaction is hydrogencarbonate + L-glutamine + 2 ATP + H2O = carbamoyl phosphate + L-glutamate + 2 ADP + phosphate + 2 H(+). It carries out the reaction hydrogencarbonate + NH4(+) + 2 ATP = carbamoyl phosphate + 2 ADP + phosphate + 2 H(+). The protein operates within amino-acid biosynthesis; L-arginine biosynthesis; carbamoyl phosphate from bicarbonate: step 1/1. It participates in pyrimidine metabolism; UMP biosynthesis via de novo pathway; (S)-dihydroorotate from bicarbonate: step 1/3. Functionally, large subunit of the glutamine-dependent carbamoyl phosphate synthetase (CPSase). CPSase catalyzes the formation of carbamoyl phosphate from the ammonia moiety of glutamine, carbonate, and phosphate donated by ATP, constituting the first step of 2 biosynthetic pathways, one leading to arginine and/or urea and the other to pyrimidine nucleotides. The large subunit (synthetase) binds the substrates ammonia (free or transferred from glutamine from the small subunit), hydrogencarbonate and ATP and carries out an ATP-coupled ligase reaction, activating hydrogencarbonate by forming carboxy phosphate which reacts with ammonia to form carbamoyl phosphate. The chain is Carbamoyl phosphate synthase large chain, C-terminal section (carB2) from Methanopyrus kandleri (strain AV19 / DSM 6324 / JCM 9639 / NBRC 100938).